Reading from the N-terminus, the 326-residue chain is Olfactory receptor 11H12 (326 aa).

The Extracellular portion of the chain corresponds to 1-44 (MCPLTLQVTGLMNVSEPNSSFAFVNEFILQGFTCEWTIQIFLFS). N-linked (GlcNAc...) asparagine glycans are attached at residues Asn13 and Asn18. Residues 45–65 (LFTTTYALTITGNGAIAFVLW) traverse the membrane as a helical segment. At 66–72 (CDWRLHT) the chain is on the cytoplasmic side. Residues 73–93 (PMYMFLGNFSFLEIWYVSSTV) form a helical membrane-spanning segment. Residues 94-112 (PKMLVNFLSEKKNISFAGC) are Extracellular-facing. Residue Asn106 is glycosylated (N-linked (GlcNAc...) asparagine). An intrachain disulfide couples Cys112 to Cys194. The helical transmembrane segment at 113-133 (FLQFYFFFSLGTSECLLLTVM) threads the bilayer. Over 134-158 (AFDQYLAICRPLLYPNIMTGHLCAK) the chain is Cytoplasmic. The chain crosses the membrane as a helical span at residues 159-179 (LVILCWVCGFLWFLIPIVLIS). Over 180 to 216 (QMPFCGPNIIDHVVCDPGPRFALDCVSAPRIQLFCYT) the chain is Extracellular. The chain crosses the membrane as a helical span at residues 217–237 (LSSLVIFGNFLFIIGSYTLVL). Residues 238 to 259 (KAVLGMPSSTGRHKAFSTCGSH) are Cytoplasmic-facing. The chain crosses the membrane as a helical span at residues 260 to 280 (LAVVSLCYSSLMVMYVSPGLG). At 281 to 287 (HSTGMQK) the chain is on the extracellular side. The chain crosses the membrane as a helical span at residues 288–308 (IETLFYAMVTPLFNPLIYSLQ). At 309–326 (NKEIKAALRKVLGSSNII) the chain is on the cytoplasmic side.

Belongs to the G-protein coupled receptor 1 family.

The protein resides in the cell membrane. Functionally, odorant receptor. The chain is Olfactory receptor 11H12 (OR11H12) from Homo sapiens (Human).